We begin with the raw amino-acid sequence, 221 residues long: ATP-dependent dethiobiotin synthetase BioD (221 aa).

ATP is bound at residue 13–18 (DIGKTY). Thr-17 serves as a coordination point for Mg(2+). The active site involves Lys-38. Substrate is bound at residue Ser-42. ATP contacts are provided by residues Asp-51, 112–115 (EGSG), and 176–177 (NR). Residues Asp-51 and Glu-112 each contribute to the Mg(2+) site.

It belongs to the dethiobiotin synthetase family. As to quaternary structure, homodimer. The cofactor is Mg(2+).

The protein localises to the cytoplasm. It catalyses the reaction (7R,8S)-7,8-diammoniononanoate + CO2 + ATP = (4R,5S)-dethiobiotin + ADP + phosphate + 3 H(+). It functions in the pathway cofactor biosynthesis; biotin biosynthesis; biotin from 7,8-diaminononanoate: step 1/2. Catalyzes a mechanistically unusual reaction, the ATP-dependent insertion of CO2 between the N7 and N8 nitrogen atoms of 7,8-diaminopelargonic acid (DAPA, also called 7,8-diammoniononanoate) to form a ureido ring. In Brachyspira hyodysenteriae (strain ATCC 49526 / WA1), this protein is ATP-dependent dethiobiotin synthetase BioD.